The sequence spans 108 residues: MKTLLLTLVVVTIVCLDLAYTRKCYKTHPYKSEPCASGENLCYTKTWCDFRCSQLGKAVELGCAATCPTTKPYEEVTCCSTDDCNRFPNWERPRPRPRGLLSSIMDHP.

A signal peptide spans Met1–Thr21. 5 disulfides stabilise this stretch: Cys24/Cys42, Cys35/Cys63, Cys48/Cys52, Cys67/Cys78, and Cys79/Cys84.

It belongs to the three-finger toxin family. Long-chain subfamily. Type II alpha-neurotoxin sub-subfamily. Expressed by the venom gland.

It localises to the secreted. Its function is as follows. Binds with high affinity to muscular (alpha-1/CHRNA1) and neuronal (alpha-7/CHRNA7) nicotinic acetylcholine receptor (nAChR) and inhibits acetylcholine from binding to the receptor, thereby impairing neuromuscular and neuronal transmission. The polypeptide is Long neurotoxin 13 (Drysdalia coronoides (White-lipped snake)).